The sequence spans 61 residues: Large ribosomal subunit protein uL30 (61 aa).

This sequence belongs to the universal ribosomal protein uL30 family. As to quaternary structure, part of the 50S ribosomal subunit.

This Lacticaseibacillus casei (strain BL23) (Lactobacillus casei) protein is Large ribosomal subunit protein uL30.